The sequence spans 191 residues: Protein GrpE (191 aa).

Over residues 1 to 13 (MSEKKNKKEKLAE) the composition is skewed to basic and acidic residues. Residues 1–40 (MSEKKNKKEKLAEEIEQEELNSLDESVETVEEEATEETLT) are disordered. Residues 14–40 (EIEQEELNSLDESVETVEEEATEETLT) are compositionally biased toward acidic residues.

The protein belongs to the GrpE family. As to quaternary structure, homodimer.

The protein resides in the cytoplasm. Functionally, participates actively in the response to hyperosmotic and heat shock by preventing the aggregation of stress-denatured proteins, in association with DnaK and GrpE. It is the nucleotide exchange factor for DnaK and may function as a thermosensor. Unfolded proteins bind initially to DnaJ; upon interaction with the DnaJ-bound protein, DnaK hydrolyzes its bound ATP, resulting in the formation of a stable complex. GrpE releases ADP from DnaK; ATP binding to DnaK triggers the release of the substrate protein, thus completing the reaction cycle. Several rounds of ATP-dependent interactions between DnaJ, DnaK and GrpE are required for fully efficient folding. In Listeria innocua serovar 6a (strain ATCC BAA-680 / CLIP 11262), this protein is Protein GrpE.